The primary structure comprises 854 residues: Zinc finger protein 341 (854 aa).

A C2H2-type 1; atypical zinc finger spans residues F53–C76. The tract at residues D152–V217 is disordered. The segment covering Q163–T176 has biased composition (polar residues). A compositionally biased stretch (pro residues) spans Q177–P210. 2 consecutive C2H2-type zinc fingers follow at residues L322 to H344 and F350 to H372. The disordered stretch occupies residues S399–E434. Low complexity predominate over residues G408–L422. 9 C2H2-type zinc fingers span residues Y445 to H467, Y473 to H497, Y503 to H525, Y540 to H564, F566 to H588, F594 to H616, Y622 to H644, Y650 to H677, and H683 to H705. The tract at residues C731–V763 is disordered.

The protein belongs to the krueppel C2H2-type zinc-finger protein family. As to quaternary structure, binds DNA and to the STAT3 promoter.

The protein resides in the nucleus. Its function is as follows. Transcriptional activator of STAT3 involved in the regulation of immune homeostasis. Also able to activate STAT1 transcription. This chain is Zinc finger protein 341 (ZNF341), found in Homo sapiens (Human).